We begin with the raw amino-acid sequence, 238 residues long: ATP synthase subunit a (238 aa).

The next 4 membrane-spanning stretches (helical) occupy residues 17–37 (LSNI…AIIC), 80–100 (ITLL…QIAI), 112–132 (DPIV…YYGI), and 194–214 (IFVG…SIFI).

It belongs to the ATPase A chain family. F-type ATPases have 2 components, CF(1) - the catalytic core - and CF(0) - the membrane proton channel. CF(1) has five subunits: alpha(3), beta(3), gamma(1), delta(1), epsilon(1). CF(0) has three main subunits: a(1), b(2) and c(9-12). The alpha and beta chains form an alternating ring which encloses part of the gamma chain. CF(1) is attached to CF(0) by a central stalk formed by the gamma and epsilon chains, while a peripheral stalk is formed by the delta and b chains.

The protein resides in the cell membrane. Key component of the proton channel; it plays a direct role in the translocation of protons across the membrane. This is ATP synthase subunit a from Listeria welshimeri serovar 6b (strain ATCC 35897 / DSM 20650 / CCUG 15529 / CIP 8149 / NCTC 11857 / SLCC 5334 / V8).